The primary structure comprises 165 residues: UPF0114 protein Ent638_3411 (165 aa).

A run of 3 helical transmembrane segments spans residues 15-35 (LLAP…IKFF), 53-73 (LILV…LVMV), and 136-156 (LMWY…MGYL).

It belongs to the UPF0114 family.

The protein localises to the cell membrane. The sequence is that of UPF0114 protein Ent638_3411 from Enterobacter sp. (strain 638).